The following is a 224-amino-acid chain: uncharacterized protein (224 aa).

It to M.tuberculosis Rv2558.

This is an uncharacterized protein from Mycobacterium tuberculosis (strain CDC 1551 / Oshkosh).